A 269-amino-acid polypeptide reads, in one-letter code: Interleukin-1 beta (269 aa).

The propeptide occupies 1–117 (MATVPELNCE…DDDDNLLVCD (117 aa)).

This sequence belongs to the IL-1 family. Monomer. Interacts with MEFV. Interacts with integrins ITGAV:ITGBV and ITGA5:ITGB1; integrin-binding is required for IL1B signaling. Interacts with cargo receptor TMED10; the interaction is direct and is required for the secretion of IL1B mature form. Interacts with HSP90AB1; the interaction facilitates cargo translocation into the ERGIC. Interacts with HSP90B1; the interaction facilitates cargo translocation into the ERGIC. Expressed in activated macrophages (at protein level).

The protein localises to the cytoplasm. The protein resides in the cytosol. Its subcellular location is the secreted. It is found in the lysosome. It localises to the extracellular exosome. Functionally, potent pro-inflammatory cytokine. Initially discovered as the major endogenous pyrogen, induces prostaglandin synthesis, neutrophil influx and activation, T-cell activation and cytokine production, B-cell activation and antibody production, and fibroblast proliferation and collagen production. Promotes Th17 differentiation of T-cells. Synergizes with IL12/interleukin-12 to induce IFNG synthesis from T-helper 1 (Th1) cells. Plays a role in angiogenesis by inducing VEGF production synergistically with TNF and IL6. Involved in transduction of inflammation downstream of pyroptosis: its mature form is specifically released in the extracellular milieu by passing through the gasdermin-D (GSDMD) pore. The chain is Interleukin-1 beta (Il1b) from Mus musculus (Mouse).